The following is a 359-amino-acid chain: Phospho-N-acetylmuramoyl-pentapeptide-transferase (359 aa).

Helical transmembrane passes span 3–23 (QILI…PVLI), 55–75 (VAIL…GLAL), 84–104 (GLLV…DDLI), 120–140 (TVGI…FGNA), 156–176 (IATV…LVSA), 187–207 (LDGL…LITF), 231–251 (LALV…WNAA), 255–275 (IFMG…LSVT), 280–300 (ILAV…VVQI), and 334–354 (FWLL…GEWL).

This sequence belongs to the glycosyltransferase 4 family. MraY subfamily. Mg(2+) is required as a cofactor.

Its subcellular location is the cell membrane. The catalysed reaction is UDP-N-acetyl-alpha-D-muramoyl-L-alanyl-gamma-D-glutamyl-meso-2,6-diaminopimeloyl-D-alanyl-D-alanine + di-trans,octa-cis-undecaprenyl phosphate = di-trans,octa-cis-undecaprenyl diphospho-N-acetyl-alpha-D-muramoyl-L-alanyl-D-glutamyl-meso-2,6-diaminopimeloyl-D-alanyl-D-alanine + UMP. It functions in the pathway cell wall biogenesis; peptidoglycan biosynthesis. Functionally, catalyzes the initial step of the lipid cycle reactions in the biosynthesis of the cell wall peptidoglycan: transfers peptidoglycan precursor phospho-MurNAc-pentapeptide from UDP-MurNAc-pentapeptide onto the lipid carrier undecaprenyl phosphate, yielding undecaprenyl-pyrophosphoryl-MurNAc-pentapeptide, known as lipid I. This is Phospho-N-acetylmuramoyl-pentapeptide-transferase from Mycobacterium sp. (strain JLS).